Consider the following 345-residue polypeptide: MSRYQDAGVDVNAGYELVHRIKDAVKSTDRPGVIGGIGSFGGMFDLEKLQVQHPILVSGTDGVGTKLLIAQQMNKHDTIGIDVVAMCVNDVLAQGAEPITFLDYIATGHNDPAKMAAIVSGVATGCREAGAALIGGETAEMPDMYAANEYDLAGTVTGIAEKEELLTTAGPQKGDILLGLPSSGLHSNGFSLVRQILFKDNHVKLTDRPEALRGKTVGETILTPTRIYVQAVLPLVHRKLVHGISHITGGGLIENVPRMLGDNLQAVIDPGRWPQLPVFDYLRVLGGLTKEDCFEAFNMGIGMVLAVAPDQVAQVQEILSNKNMTSYQIGYLRHCLPDTKKIVIK.

It belongs to the AIR synthase family.

Its subcellular location is the cytoplasm. The enzyme catalyses 2-formamido-N(1)-(5-O-phospho-beta-D-ribosyl)acetamidine + ATP = 5-amino-1-(5-phospho-beta-D-ribosyl)imidazole + ADP + phosphate + H(+). Its pathway is purine metabolism; IMP biosynthesis via de novo pathway; 5-amino-1-(5-phospho-D-ribosyl)imidazole from N(2)-formyl-N(1)-(5-phospho-D-ribosyl)glycinamide: step 2/2. This is Phosphoribosylformylglycinamidine cyclo-ligase from Limosilactobacillus reuteri (strain DSM 20016) (Lactobacillus reuteri).